Here is a 249-residue protein sequence, read N- to C-terminus: Probable amino-acid import ATP-binding protein YxeO (249 aa).

The region spanning 2–239 (ITVKNIRKAF…PKNERTKRFI (238 aa)) is the ABC transporter domain. 34–41 (GPSGSGKS) contributes to the ATP binding site.

This sequence belongs to the ABC transporter superfamily. As to quaternary structure, the complex is composed of two ATP-binding proteins (YxeO), two transmembrane proteins (YxeN) and a solute-binding protein (YxeM).

Its subcellular location is the cell membrane. Functionally, probably part of the ABC transporter complex YxeMNO that could be involved in amino-acid import. May transport S-methylcysteine. Responsible for energy coupling to the transport system. This chain is Probable amino-acid import ATP-binding protein YxeO (yxeO), found in Bacillus subtilis (strain 168).